A 325-amino-acid polypeptide reads, in one-letter code: Methionyl-tRNA formyltransferase (325 aa).

111 to 114 is a binding site for (6S)-5,6,7,8-tetrahydrofolate; that stretch reads SILP.

It belongs to the Fmt family.

It carries out the reaction L-methionyl-tRNA(fMet) + (6R)-10-formyltetrahydrofolate = N-formyl-L-methionyl-tRNA(fMet) + (6S)-5,6,7,8-tetrahydrofolate + H(+). Functionally, attaches a formyl group to the free amino group of methionyl-tRNA(fMet). The formyl group appears to play a dual role in the initiator identity of N-formylmethionyl-tRNA by promoting its recognition by IF2 and preventing the misappropriation of this tRNA by the elongation apparatus. The chain is Methionyl-tRNA formyltransferase from Microcystis aeruginosa (strain NIES-843 / IAM M-2473).